A 680-amino-acid chain; its full sequence is uncharacterized protein (680 aa).

This sequence belongs to the HyuA family.

This is an uncharacterized protein from Methanocaldococcus jannaschii (strain ATCC 43067 / DSM 2661 / JAL-1 / JCM 10045 / NBRC 100440) (Methanococcus jannaschii).